Reading from the N-terminus, the 133-residue chain is Ribosome-binding factor A (133 aa).

It belongs to the RbfA family. As to quaternary structure, monomer. Binds 30S ribosomal subunits, but not 50S ribosomal subunits or 70S ribosomes.

Its subcellular location is the cytoplasm. In terms of biological role, one of several proteins that assist in the late maturation steps of the functional core of the 30S ribosomal subunit. Associates with free 30S ribosomal subunits (but not with 30S subunits that are part of 70S ribosomes or polysomes). Required for efficient processing of 16S rRNA. May interact with the 5'-terminal helix region of 16S rRNA. The polypeptide is Ribosome-binding factor A (Escherichia coli O127:H6 (strain E2348/69 / EPEC)).